We begin with the raw amino-acid sequence, 762 residues long: 5-methyltetrahydropteroyltriglutamate--homocysteine methyltransferase (762 aa).

5-methyltetrahydropteroyltri-L-glutamate is bound by residues 17–20 (REWK) and Lys111. L-homocysteine contacts are provided by residues 435–437 (IGS) and Glu488. L-methionine-binding positions include 435-437 (IGS) and Glu488. 5-methyltetrahydropteroyltri-L-glutamate contacts are provided by residues 519–520 (RC) and Trp565. Asp603 contributes to the L-homocysteine binding site. L-methionine is bound at residue Asp603. Glu609 is a binding site for 5-methyltetrahydropteroyltri-L-glutamate. Zn(2+)-binding residues include His645, Cys647, and Glu669. His698 serves as the catalytic Proton donor. Zn(2+) is bound at residue Cys730.

Belongs to the vitamin-B12 independent methionine synthase family. The cofactor is Zn(2+).

The enzyme catalyses 5-methyltetrahydropteroyltri-L-glutamate + L-homocysteine = tetrahydropteroyltri-L-glutamate + L-methionine. It functions in the pathway amino-acid biosynthesis; L-methionine biosynthesis via de novo pathway; L-methionine from L-homocysteine (MetE route): step 1/1. Functionally, catalyzes the transfer of a methyl group from 5-methyltetrahydrofolate to homocysteine resulting in methionine formation. This Bacillus cereus (strain AH820) protein is 5-methyltetrahydropteroyltriglutamate--homocysteine methyltransferase.